The primary structure comprises 127 residues: Large ribosomal subunit protein bL17 (127 aa).

This sequence belongs to the bacterial ribosomal protein bL17 family. As to quaternary structure, part of the 50S ribosomal subunit. Contacts protein L32.

In Leuconostoc mesenteroides subsp. mesenteroides (strain ATCC 8293 / DSM 20343 / BCRC 11652 / CCM 1803 / JCM 6124 / NCDO 523 / NBRC 100496 / NCIMB 8023 / NCTC 12954 / NRRL B-1118 / 37Y), this protein is Large ribosomal subunit protein bL17.